Here is a 231-residue protein sequence, read N- to C-terminus: Eukaryotic translation initiation factor 4E allele A (231 aa).

Over residues 1-20 (MAAAEMERTTSFDAAEKLKA) the composition is skewed to basic and acidic residues. Residues 1–36 (MAAAEMERTTSFDAAEKLKAADAGGGEVDDELEEGE) form a disordered region. The span at 27–36 (EVDDELEEGE) shows a compositional bias: acidic residues. EIF4G-binding regions lie at residues 56–59 (HPLE) and 66–102 (FDSPIAKSRQTAWGSSLRNVYTFSTVEDFWGAYNNIH). MRNA contacts are provided by residues 74–79 (RQTAWG), Lys-106, and 124–125 (WE). Cys-129 and Cys-167 are joined by a disulfide. An EIF4G-binding region spans residues 150-159 (YTLLAMIGHQ). Residues 174–179 (RSKGEK) and 219–223 (KRLDR) each bind mRNA.

It belongs to the eukaryotic initiation factor 4E family. In terms of assembly, EIF4F is a multi-subunit complex, the composition of which varies with external and internal environmental conditions. It is composed of at least EIF4A, EIF4E and EIF4G. EIF4E is also known to interact with other partners. In higher plants two isoforms of EIF4F have been identified, named isoform EIF4F and isoform EIF(iso)4F. Isoform EIF4F has subunits p220 and p26, whereas isoform EIF(iso)4F has subunits p82 and p28. (Microbial infection) Interacts with viral genome-linked protein (VPg); this interaction is possible in susceptible hosts but impaired in resistant plants. According to the redox status, the Cys-129-Cys-167 disulfide bridge may have a role in regulating protein function by affecting its ability to bind capped mRNA.

It localises to the nucleus. It is found in the cytoplasm. In terms of biological role, component of the protein complex eIF4F, which is involved in the recognition of the mRNA cap, ATP-dependent unwinding of 5'-terminal secondary structure and recruitment of mRNA to the ribosome. Recognizes and binds the 7-methylguanosine-containing mRNA cap during an early step in the initiation of protein synthesis and facilitates ribosome binding by inducing the unwinding of the mRNAs secondary structures. Key component of recessive resistance to potyviruses. (Microbial infection) Susceptibility host factor required for viral infection (e.g. Potato virus Y (PVY)) by recruiting viral RNAs to the host ribosomal complex via an interaction with viral genome-linked protein (VPg). The chain is Eukaryotic translation initiation factor 4E allele A from Solanum tuberosum (Potato).